Here is a 1133-residue protein sequence, read N- to C-terminus: Sterol regulatory element-binding protein 2 (1133 aa).

The segment at 1–50 (MDENSELGGLETMETLTELGDELTLGDIDEMLQFVSNQVGEFSDLFSEQL) is transcriptional activation (acidic). Over 1–473 (MDENSELGGL…VALGMVDRSR (473 aa)) the chain is Cytoplasmic. Residues 56–65 (GGGGGSGSGG) are compositionally biased toward gly residues. The disordered stretch occupies residues 56–136 (GGGGGSGSGG…PQPQPQPPAQ (81 aa)). Low complexity predominate over residues 92-109 (PLSTFSPSSTSPQAPALQ). Residues 114-134 (PTPPRATPVLQPRPQPQPQPP) are compositionally biased toward pro residues. Residues 229–483 (QQVPVLVQPQ…ILLCVLTFLG (255 aa)) form an interaction with LMNA region. In terms of domain architecture, bHLH spans 322 to 372 (ERRTTHNIIEKRYRSSINDKIIELKDLVMGTDAKMHKSGVLRKAIDYIKYL). Positions 372 to 393 (LQQVNHKLRQENMVLKLANQKN) are leucine-zipper. Lysine 456 participates in a covalent cross-link: Glycyl lysine isopeptide (Lys-Gly) (interchain with G-Cter in SUMO2). Residues 474-494 (ILLCVLTFLGLSFNPLTSLLQ) form a helical membrane-spanning segment. Residues 495–525 (WGGAHNPDQHPYSGSGRNVLSLESGSGGWFD) lie on the Lumenal side of the membrane. Residues 526–546 (WMMPTLLLWLLNGVIVLSVFV) traverse the membrane as a helical segment. Topologically, residues 547-1133 (KLLVHGEPVI…LGGGTAIAAS (587 aa)) are cytoplasmic. Serine 1090 is subject to Phosphoserine.

It belongs to the SREBP family. Homodimer; efficient DNA binding of the soluble transcription factor fragment requires dimerization with another bHLH protein. Interacts with LMNA. As to quaternary structure, forms a tight complex with SCAP, the SCAP-SREBP complex, in the endoplasmic reticulum membrane and the Golgi apparatus. Interacts with PAQR3; the interaction anchors the SCAP-SREBP complex to the Golgi apparatus in low cholesterol conditions. Interacts (via C-terminal domain) with RNF139. In terms of processing, processed in the Golgi apparatus, releasing the protein from the membrane. At low cholesterol the SCAP-SREBP complex is recruited into COPII vesicles for export from the endoplasmic reticulum. In the Golgi, complex SREBPs are cleaved sequentially by site-1 (MBTPS1, S1P) and site-2 (MBTPS2, S2P) proteases. The first cleavage by site-1 protease occurs within the luminal loop, the second cleavage by site-2 protease occurs within the first transmembrane domain, releasing the transcription factor from the Golgi membrane. Apoptosis triggers cleavage by the cysteine proteases caspase-3 and caspase-7. Cleavage and activation is induced by mediated cholesterol efflux. Post-translationally, phosphorylated by AMPK, leading to suppress protein processing and nuclear translocation, and repress target gene expression. SCAP-free SREBF2 is ubiquitinated by the BCR(ARMC5) complex, leading to its degradation. In terms of processing, ubiquitinated; the nuclear form has a rapid turnover and is rapidly ubiquitinated and degraded by the proteasome in the nucleus.

It is found in the endoplasmic reticulum membrane. The protein localises to the golgi apparatus membrane. Its subcellular location is the cytoplasmic vesicle. It localises to the COPII-coated vesicle membrane. The protein resides in the nucleus. Activation by cleavage is down-regulated upon activation of SIRT3-dependent PRKAA1/AMPK-alpha signaling cascade which leads to inhibition of ATP-consuming lipogenesis to restore cellular energy balance. Precursor of the transcription factor form (Processed sterol regulatory element-binding protein 2), which is embedded in the endoplasmic reticulum membrane. Low sterol concentrations promote processing of this form, releasing the transcription factor form that translocates into the nucleus and activates transcription of genes involved in cholesterol biosynthesis. In terms of biological role, key transcription factor that regulates expression of genes involved in cholesterol biosynthesis. Binds to the sterol regulatory element 1 (SRE-1) (5'-ATCACCCCAC-3'). Has dual sequence specificity binding to both an E-box motif (5'-ATCACGTGA-3') and to SRE-1 (5'-ATCACCCCAC-3'). Regulates transcription of genes related to cholesterol synthesis pathway. Regulates hepatic lipogenesis. In Rattus norvegicus (Rat), this protein is Sterol regulatory element-binding protein 2.